Reading from the N-terminus, the 95-residue chain is Aspartyl/glutamyl-tRNA(Asn/Gln) amidotransferase subunit C (95 aa).

This sequence belongs to the GatC family. As to quaternary structure, heterotrimer of A, B and C subunits.

It catalyses the reaction L-glutamyl-tRNA(Gln) + L-glutamine + ATP + H2O = L-glutaminyl-tRNA(Gln) + L-glutamate + ADP + phosphate + H(+). It carries out the reaction L-aspartyl-tRNA(Asn) + L-glutamine + ATP + H2O = L-asparaginyl-tRNA(Asn) + L-glutamate + ADP + phosphate + 2 H(+). Functionally, allows the formation of correctly charged Asn-tRNA(Asn) or Gln-tRNA(Gln) through the transamidation of misacylated Asp-tRNA(Asn) or Glu-tRNA(Gln) in organisms which lack either or both of asparaginyl-tRNA or glutaminyl-tRNA synthetases. The reaction takes place in the presence of glutamine and ATP through an activated phospho-Asp-tRNA(Asn) or phospho-Glu-tRNA(Gln). The polypeptide is Aspartyl/glutamyl-tRNA(Asn/Gln) amidotransferase subunit C (Dehalococcoides mccartyi (strain CBDB1)).